A 105-amino-acid chain; its full sequence is Serine protease inhibitor Kazal-type 6 (105 aa).

An N-terminal signal peptide occupies residues Met-1 to Ser-23. Pyrrolidone carboxylic acid is present on Gln-24. Residues Arg-49 to Cys-105 form the Kazal-like domain. Disulfide bonds link Cys-55-Cys-87, Cys-65-Cys-84, and Cys-73-Cys-105.

Its subcellular location is the secreted. Its function is as follows. Serine protease inhibitor selective for kallikreins. Efficiently inhibits KLK4, KLK5, KLK6, KLK7, KLK12, KLK13 and KLK14. Doesn't inhibit KLK8. The polypeptide is Serine protease inhibitor Kazal-type 6 (Spink6) (Rattus norvegicus (Rat)).